Consider the following 125-residue polypeptide: NADH-ubiquinone oxidoreductase chain 1 (125 aa).

Helical transmembrane passes span 5 to 25, 74 to 94, and 105 to 125; these read IFAF…VAFL, YLFF…WNFM, and LSLL…LGSG.

It belongs to the complex I subunit 1 family.

The protein resides in the mitochondrion inner membrane. It catalyses the reaction a ubiquinone + NADH + 5 H(+)(in) = a ubiquinol + NAD(+) + 4 H(+)(out). Functionally, core subunit of the mitochondrial membrane respiratory chain NADH dehydrogenase (Complex I) that is believed to belong to the minimal assembly required for catalysis. Complex I functions in the transfer of electrons from NADH to the respiratory chain. The immediate electron acceptor for the enzyme is believed to be ubiquinone. The protein is NADH-ubiquinone oxidoreductase chain 1 (ND1) of Arbacia lixula (Black urchin).